The chain runs to 203 residues: MAFLNQDGDKYTSAKDDGTGNPITAVSIERSTVPLEVGLNNDQPLNVNVANTALDVNITNTASVPVLVKNTAAIKTQVQKSYSEFVVTDADTVATGATKSYTVDLIDSLGVFRTYGVAMYTTQTDSSNSKVLASIYSVPKNIPFYSATTSGNDNSVLFNSIVFVQNYPLQKQLTFTAPKIHLTVKAAGTVDLTGLKIVVWGME.

Positions Met1–Ile23 are disordered. Over residues Asp7 to Gly18 the composition is skewed to basic and acidic residues.

The chain is SPbeta prophage-derived uncharacterized protein YouA (youA) from Bacillus subtilis (strain 168).